Here is a 758-residue protein sequence, read N- to C-terminus: Phosphoribosylformylglycinamidine synthase subunit PurL (758 aa).

Residue histidine 57 is part of the active site. ATP contacts are provided by tyrosine 60 and arginine 104. Glutamate 106 serves as a coordination point for Mg(2+). Residues 107 to 110 (SHNH) and arginine 129 each bind substrate. Residue histidine 108 is the Proton acceptor of the active site. Aspartate 130 serves as a coordination point for Mg(2+). Residue glutamine 254 participates in substrate binding. Aspartate 282 contributes to the Mg(2+) binding site. 326–328 (ESQ) is a binding site for substrate. 2 residues coordinate ATP: asparagine 509 and glycine 546. Asparagine 547 contributes to the Mg(2+) binding site. Position 549 (serine 549) interacts with substrate.

It belongs to the FGAMS family. As to quaternary structure, monomer. Part of the FGAM synthase complex composed of 1 PurL, 1 PurQ and 2 PurS subunits.

The protein resides in the cytoplasm. The enzyme catalyses N(2)-formyl-N(1)-(5-phospho-beta-D-ribosyl)glycinamide + L-glutamine + ATP + H2O = 2-formamido-N(1)-(5-O-phospho-beta-D-ribosyl)acetamidine + L-glutamate + ADP + phosphate + H(+). It functions in the pathway purine metabolism; IMP biosynthesis via de novo pathway; 5-amino-1-(5-phospho-D-ribosyl)imidazole from N(2)-formyl-N(1)-(5-phospho-D-ribosyl)glycinamide: step 1/2. Its function is as follows. Part of the phosphoribosylformylglycinamidine synthase complex involved in the purines biosynthetic pathway. Catalyzes the ATP-dependent conversion of formylglycinamide ribonucleotide (FGAR) and glutamine to yield formylglycinamidine ribonucleotide (FGAM) and glutamate. The FGAM synthase complex is composed of three subunits. PurQ produces an ammonia molecule by converting glutamine to glutamate. PurL transfers the ammonia molecule to FGAR to form FGAM in an ATP-dependent manner. PurS interacts with PurQ and PurL and is thought to assist in the transfer of the ammonia molecule from PurQ to PurL. The protein is Phosphoribosylformylglycinamidine synthase subunit PurL of Corynebacterium ammoniagenes (Brevibacterium ammoniagenes).